The following is a 329-amino-acid chain: 4-hydroxythreonine-4-phosphate dehydrogenase (329 aa).

Substrate contacts are provided by His-136 and Thr-137. Residues His-166, His-211, and His-266 each contribute to the a divalent metal cation site. Lys-274, Asn-283, and Arg-292 together coordinate substrate.

This sequence belongs to the PdxA family. Homodimer. The cofactor is Zn(2+). Requires Mg(2+) as cofactor. Co(2+) serves as cofactor.

Its subcellular location is the cytoplasm. It carries out the reaction 4-(phosphooxy)-L-threonine + NAD(+) = 3-amino-2-oxopropyl phosphate + CO2 + NADH. It functions in the pathway cofactor biosynthesis; pyridoxine 5'-phosphate biosynthesis; pyridoxine 5'-phosphate from D-erythrose 4-phosphate: step 4/5. Its function is as follows. Catalyzes the NAD(P)-dependent oxidation of 4-(phosphooxy)-L-threonine (HTP) into 2-amino-3-oxo-4-(phosphooxy)butyric acid which spontaneously decarboxylates to form 3-amino-2-oxopropyl phosphate (AHAP). In Pseudomonas syringae pv. tomato (strain ATCC BAA-871 / DC3000), this protein is 4-hydroxythreonine-4-phosphate dehydrogenase.